A 726-amino-acid chain; its full sequence is Dipeptidyl-peptidase 5 (726 aa).

An N-terminal signal peptide occupies residues 1–19 (MAPAKWLIASLAFASTGLA). N-linked (GlcNAc...) asparagine glycosylation is found at N96 and N252. The segment at 268–292 (VAEPINKRNGPRTPHGIEGASSSPV) is disordered. N485 carries an N-linked (GlcNAc...) asparagine glycan. The Charge relay system role is filled by S558. N605 is a glycosylation site (N-linked (GlcNAc...) asparagine). Active-site charge relay system residues include D641 and H673. An N-linked (GlcNAc...) asparagine glycan is attached at N699.

This sequence belongs to the peptidase S9C family.

Its subcellular location is the secreted. In terms of biological role, extracellular dipeptidyl-peptidase which removes N-terminal dipeptides sequentially from polypeptides having unsubstituted N-termini. Contributes to pathogenicity. The chain is Dipeptidyl-peptidase 5 (DPP5) from Arthroderma otae (strain ATCC MYA-4605 / CBS 113480) (Microsporum canis).